The following is a 481-amino-acid chain: Proline--tRNA ligase (481 aa).

The protein belongs to the class-II aminoacyl-tRNA synthetase family. ProS type 3 subfamily. As to quaternary structure, homodimer.

Its subcellular location is the cytoplasm. It carries out the reaction tRNA(Pro) + L-proline + ATP = L-prolyl-tRNA(Pro) + AMP + diphosphate. Catalyzes the attachment of proline to tRNA(Pro) in a two-step reaction: proline is first activated by ATP to form Pro-AMP and then transferred to the acceptor end of tRNA(Pro). This Chlorobium phaeobacteroides (strain BS1) protein is Proline--tRNA ligase.